A 318-amino-acid polypeptide reads, in one-letter code: Protoheme IX farnesyltransferase (318 aa).

The next 9 helical transmembrane spans lie at 37–57 (VMELLLVTTLPTMIFAARGLP), 59–79 (IWLILATMIGGAFAAGSAGAF), 108–128 (EALVFSWALGILSIAILWFGA), 131–151 (LAGLLGIAAIFFYVVVYTLIL), 158–178 (NIVWGGVAGCMPVLIAWAAVT), 183–203 (WPAIILFMVIFLWTPPHYWPL), 216–238 (VPMLGAVAGARIVSVQVVLYTWA), 249–269 (LGHACIVYTVVAGAAGLWFLL), and 296–316 (ISYLTLLFVALAVDPFVGMPL).

It belongs to the UbiA prenyltransferase family. Protoheme IX farnesyltransferase subfamily.

It is found in the cell membrane. It catalyses the reaction heme b + (2E,6E)-farnesyl diphosphate + H2O = Fe(II)-heme o + diphosphate. It functions in the pathway porphyrin-containing compound metabolism; heme O biosynthesis; heme O from protoheme: step 1/1. Functionally, converts heme B (protoheme IX) to heme O by substitution of the vinyl group on carbon 2 of heme B porphyrin ring with a hydroxyethyl farnesyl side group. The polypeptide is Protoheme IX farnesyltransferase (Renibacterium salmoninarum (strain ATCC 33209 / DSM 20767 / JCM 11484 / NBRC 15589 / NCIMB 2235)).